The chain runs to 23 residues: Apolipophorin-3 (23 aa).

This sequence belongs to the insect apolipophorin-3 family. In terms of assembly, equilibrium between a soluble monomer and a bound lipoprotein form. Apolipophorin-3 associates with lipophorin during lipid loading until each particle contains 9 or 14 molecules of apolipophorin-3. As to expression, hemolymph.

The protein resides in the secreted. Its function is as follows. Assists in the loading of diacylglycerol, generated from triacylglycerol stores in the fat body through the action of adipokinetic hormone, into lipophorin, the hemolymph lipoprotein. It increases the lipid carrying capacity of lipophorin by covering the expanding hydrophobic surface resulting from diacylglycerol uptake. It thus plays a critical role in the transport of lipids during flight in several species of insects. This chain is Apolipophorin-3, found in Melanoplus sanguinipes (Migratory grasshopper).